The sequence spans 740 residues: ATP-dependent DNA helicase Hel308 (740 aa).

ATP-binding positions include Gln28 and 46 to 53; that span reads IPTASGKT. The 172-residue stretch at 33–204 folds into the Helicase ATP-binding domain; sequence RQGLLDGKNL…WMDAALVQSE (172 aa). The short motif at 149–152 is the DEAH box element; that stretch reads DEVH. The Helicase C-terminal domain maps to 236–436; it reads EVNSLVADTL…EPAMRAHALS (201 aa). The interval 716–740 is disordered; it reads VDHTPPETEEQPQVSGQSTLFSFDG. Residues 726–740 are compositionally biased toward polar residues; sequence QPQVSGQSTLFSFDG.

Belongs to the helicase family. Hel308 subfamily. In terms of assembly, monomer.

The catalysed reaction is Couples ATP hydrolysis with the unwinding of duplex DNA by translocating in the 3'-5' direction.. It catalyses the reaction ATP + H2O = ADP + phosphate + H(+). In terms of biological role, DNA-dependent ATPase and 3'-5' DNA helicase that may be involved in repair of stalled replication forks. The polypeptide is ATP-dependent DNA helicase Hel308 (Methanocella arvoryzae (strain DSM 22066 / NBRC 105507 / MRE50)).